The chain runs to 139 residues: mRNA stability protein mug134 (139 aa).

The disordered stretch occupies residues 83–139 (IGKEIPSPDTIPHRVVSAGSPNKEPSLHTKRPSESSPSGASSRRESVTRHDLESNEN). Residues 124–139 (SRRESVTRHDLESNEN) show a composition bias toward basic and acidic residues.

It belongs to the endosulfine family.

Its subcellular location is the nucleus. The protein localises to the cytoplasm. Its function is as follows. Plays an essential role in initiation of the G0 program by preventing the degradation of specific nutrient-regulated mRNAs via the 5'-3' mRNA decay pathway. This chain is mRNA stability protein mug134 (mug134), found in Schizosaccharomyces pombe (strain 972 / ATCC 24843) (Fission yeast).